A 404-amino-acid chain; its full sequence is Cysteine desulfurase IscS (404 aa).

Pyridoxal 5'-phosphate is bound by residues 75 to 76 (AT), Asn155, Gln183, and 203 to 205 (SGH). Lys206 is modified (N6-(pyridoxal phosphate)lysine). A pyridoxal 5'-phosphate-binding site is contributed by Thr243. Cys328 (cysteine persulfide intermediate) is an active-site residue. Cys328 is a [2Fe-2S] cluster binding site.

This sequence belongs to the class-V pyridoxal-phosphate-dependent aminotransferase family. NifS/IscS subfamily. Homodimer. Forms a heterotetramer with IscU, interacts with other sulfur acceptors. The cofactor is pyridoxal 5'-phosphate.

It is found in the cytoplasm. The enzyme catalyses (sulfur carrier)-H + L-cysteine = (sulfur carrier)-SH + L-alanine. The protein operates within cofactor biosynthesis; iron-sulfur cluster biosynthesis. Master enzyme that delivers sulfur to a number of partners involved in Fe-S cluster assembly, tRNA modification or cofactor biosynthesis. Catalyzes the removal of elemental sulfur atoms from cysteine to produce alanine. Functions as a sulfur delivery protein for Fe-S cluster synthesis onto IscU, an Fe-S scaffold assembly protein, as well as other S acceptor proteins. In Shewanella frigidimarina (strain NCIMB 400), this protein is Cysteine desulfurase IscS.